The primary structure comprises 198 residues: Charged multivesicular body protein 2a homolog 2 (198 aa).

Residues lysine 11 to isoleucine 42 adopt a coiled-coil conformation.

It belongs to the SNF7 family. As to quaternary structure, probable core component of the endosomal sorting required for transport complex III (ESCRT-III). ESCRT-III components are thought to multimerize to form a flat lattice on the perimeter membrane of the endosome.

The protein localises to the endosome membrane. In terms of biological role, probable core component of the endosomal sorting required for transport complex III (ESCRT-III) which is involved in multivesicular bodies (MVBs) formation and sorting of endosomal cargo proteins into MVBs. MVBs contain intraluminal vesicles (ILVs) that are generated by invagination and scission from the limiting membrane of the endosome and are delivered to lysosomes enabling degradation of membrane proteins. The chain is Charged multivesicular body protein 2a homolog 2 (chmp2a2) from Dictyostelium discoideum (Social amoeba).